A 139-amino-acid polypeptide reads, in one-letter code: 3-hydroxyacyl-[acyl-carrier-protein] dehydratase FabZ (139 aa).

Histidine 46 is an active-site residue.

This sequence belongs to the thioester dehydratase family. FabZ subfamily.

The protein resides in the cytoplasm. It carries out the reaction a (3R)-hydroxyacyl-[ACP] = a (2E)-enoyl-[ACP] + H2O. Functionally, involved in unsaturated fatty acids biosynthesis. Catalyzes the dehydration of short chain beta-hydroxyacyl-ACPs and long chain saturated and unsaturated beta-hydroxyacyl-ACPs. This Petrotoga mobilis (strain DSM 10674 / SJ95) protein is 3-hydroxyacyl-[acyl-carrier-protein] dehydratase FabZ.